Reading from the N-terminus, the 71-residue chain is Large ribosomal subunit protein bL31 (71 aa).

The Zn(2+) site is built by C16, C18, C37, and C40.

It belongs to the bacterial ribosomal protein bL31 family. Type A subfamily. In terms of assembly, part of the 50S ribosomal subunit. Zn(2+) is required as a cofactor.

In terms of biological role, binds the 23S rRNA. The protein is Large ribosomal subunit protein bL31 of Pseudoalteromonas translucida (strain TAC 125).